A 425-amino-acid chain; its full sequence is Glutamyl-tRNA reductase (425 aa).

Substrate contacts are provided by residues 49-52 (TCNR), S107, 112-114 (EPQ), and Q118. The Nucleophile role is filled by C50. 187–192 (GAGETI) is a binding site for NADP(+).

It belongs to the glutamyl-tRNA reductase family. Homodimer.

It carries out the reaction (S)-4-amino-5-oxopentanoate + tRNA(Glu) + NADP(+) = L-glutamyl-tRNA(Glu) + NADPH + H(+). The protein operates within porphyrin-containing compound metabolism; protoporphyrin-IX biosynthesis; 5-aminolevulinate from L-glutamyl-tRNA(Glu): step 1/2. Catalyzes the NADPH-dependent reduction of glutamyl-tRNA(Glu) to glutamate 1-semialdehyde (GSA). The protein is Glutamyl-tRNA reductase of Pseudomonas putida (strain GB-1).